The sequence spans 126 residues: Large ribosomal subunit protein bL12 (126 aa).

It belongs to the bacterial ribosomal protein bL12 family. In terms of assembly, homodimer. Part of the ribosomal stalk of the 50S ribosomal subunit. Forms a multimeric L10(L12)X complex, where L10 forms an elongated spine to which 2 to 4 L12 dimers bind in a sequential fashion. Binds GTP-bound translation factors.

Forms part of the ribosomal stalk which helps the ribosome interact with GTP-bound translation factors. Is thus essential for accurate translation. This Desulforudis audaxviator (strain MP104C) protein is Large ribosomal subunit protein bL12.